The following is a 591-amino-acid chain: Nuclear receptor subfamily 4 group A member 2 (591 aa).

2 disordered regions span residues 1-22 and 110-133; these read MPCVQAQYGSSPQGASPASQSY and SEEMMSHSGSVYYKPSSPPTSSTP. A compositionally biased stretch (low complexity) spans 8-22; it reads YGSSPQGASPASQSY. The nuclear receptor DNA-binding region spans 253-328; the sequence is EGLCAVCGDN…VGMVKEVVRT (76 aa). NR C4-type zinc fingers lie at residues 256–276 and 292–311; these read CAVCGDNAACQHYGVRTCEGC and CLANKNCPVDKRRRNRCQYC. A Bipartite nuclear localization signal (NLS1) motif is present at residues 280 to 307; sequence FKRTVQKNAKYVCLANKNCPVDKRRRNR. A disordered region spans residues 330 to 354; it reads SLKGRRGRLPSKPKSPQEPSPPSPP. Residues 331–343 carry the Nuclear localization signal (NLS1) motif; the sequence is LKGRRGRLPSKPK. The segment covering 345 to 354 has biased composition (pro residues); sequence PQEPSPPSPP. Positions 353-588 constitute an NR LBD domain; that stretch reads PPVSLISALV…AIIDKLFLDT (236 aa). Positions 436–445 match the nuclear export sequence (NES1) motif; the sequence is FLELFVLRLA. A nuclear export sequence (NES2) motif is present at residues 561 to 570; that stretch reads QGLQRIFYLK.

This sequence belongs to the nuclear hormone receptor family.

It is found in the cytoplasm. It localises to the nucleus. Functionally, transcriptional regulator which may play a role in the differentiation and maintenance of meso-diencephalic dopaminergic (mdDA) neurons. In Xenopus tropicalis (Western clawed frog), this protein is Nuclear receptor subfamily 4 group A member 2 (nr4a2).